Consider the following 363-residue polypeptide: 2,5-diketocamphane 1,2-monooxygenase 2 (363 aa).

Residues Met-74 and Thr-186–Ser-194 contribute to the FMN site.

The protein belongs to the bacterial luciferase oxidoreductase family. In terms of assembly, homodimer. Likely forms a loose transient complex with a P.putida flavin reductase that provides the required FMNH(2) to the enzyme.

The enzyme catalyses (1R,4R)-bornane-2,5-dione + FMNH2 + O2 = (1R,4R)-5-oxo-1,2-campholide + FMN + H2O + H(+). It functions in the pathway terpene metabolism; (R)-camphor degradation. Involved in the degradation and assimilation of (+)-camphor, which allows P.putida strain NCIMB 10007 to grow on this enantiomer of camphor as the sole carbon source. Catalyzes the FMNH(2)-dependent lactonization of 2,5-diketocamphane via a Baeyer-Villiger oxidation to produce the unstable lactone 5-oxo-1,2-campholide with (R,R) configuration, that presumably undergoes spontaneous hydrolysis to form 2-oxo-Delta(3)-4,5,5-trimethylcyclopentenylacetate. Is also able to convert (+)-camphor and norcamphor to the corresponding lactone in vitro. Shows no conversion of (-)-camphor, (+)-fenchone, (-)-fenchone, and (+)-nopinone. Acts on other bicyclic ketones and, to a lesser extent, on some 2- and 4-substituted monocyclic ketones. The polypeptide is 2,5-diketocamphane 1,2-monooxygenase 2 (Pseudomonas putida (Arthrobacter siderocapsulatus)).